Reading from the N-terminus, the 284-residue chain is 2-dehydro-3-deoxyphosphooctonate aldolase (284 aa).

The protein belongs to the KdsA family.

It localises to the cytoplasm. The catalysed reaction is D-arabinose 5-phosphate + phosphoenolpyruvate + H2O = 3-deoxy-alpha-D-manno-2-octulosonate-8-phosphate + phosphate. It participates in carbohydrate biosynthesis; 3-deoxy-D-manno-octulosonate biosynthesis; 3-deoxy-D-manno-octulosonate from D-ribulose 5-phosphate: step 2/3. The protein operates within bacterial outer membrane biogenesis; lipopolysaccharide biosynthesis. This is 2-dehydro-3-deoxyphosphooctonate aldolase from Ralstonia pickettii (strain 12J).